The primary structure comprises 438 residues: sn-glycerol-3-phosphate-binding periplasmic protein UgpB (438 aa).

Positions 1-23 are cleaved as a signal peptide; the sequence is MKPLHYTASALALGLALMGNAQA. The sn-glycerol 3-phosphate site is built by tyrosine 65, glutamate 89, serine 144, serine 270, glycine 307, tyrosine 346, and arginine 397.

It belongs to the bacterial solute-binding protein 1 family. The complex is composed of two ATP-binding proteins (UgpC), two transmembrane proteins (UgpA and UgpE) and a solute-binding protein (UgpB).

Its subcellular location is the periplasm. Functionally, part of the ABC transporter complex UgpBAEC involved in sn-glycerol-3-phosphate (G3P) import. Binds G3P. This Shigella flexneri protein is sn-glycerol-3-phosphate-binding periplasmic protein UgpB (ugpB).